A 430-amino-acid polypeptide reads, in one-letter code: Adenylosuccinate synthetase (430 aa).

GTP is bound by residues 12–18 (GDEGKGK) and 40–42 (GHT). The Proton acceptor role is filled by D13. The Mg(2+) site is built by D13 and G40. Residues 13 to 16 (DEGK), 38 to 41 (NAGH), T129, R143, Q224, T239, and R303 each bind IMP. The active-site Proton donor is H41. 299-305 (TVSNRER) contacts substrate. GTP is bound by residues R305, 331–333 (KLD), and 413–415 (STG).

It belongs to the adenylosuccinate synthetase family. Homodimer. Mg(2+) serves as cofactor.

The protein resides in the cytoplasm. It carries out the reaction IMP + L-aspartate + GTP = N(6)-(1,2-dicarboxyethyl)-AMP + GDP + phosphate + 2 H(+). The protein operates within purine metabolism; AMP biosynthesis via de novo pathway; AMP from IMP: step 1/2. Its function is as follows. Plays an important role in the de novo pathway of purine nucleotide biosynthesis. Catalyzes the first committed step in the biosynthesis of AMP from IMP. The chain is Adenylosuccinate synthetase from Ehrlichia ruminantium (strain Gardel).